A 454-amino-acid chain; its full sequence is Bifunctional protein GlmU (454 aa).

Residues 1–226 (MSLNVVILAA…PIETEGANNR (226 aa)) form a pyrophosphorylase region. UDP-N-acetyl-alpha-D-glucosamine contacts are provided by residues 8–11 (LAAG), Lys22, Gln73, 78–79 (GT), 100–102 (YGD), Gly137, Glu151, Asn166, and Asn224. Asp102 provides a ligand contact to Mg(2+). Mg(2+) is bound at residue Asn224. The segment at 227-247 (VQLAALERAYQARRAEELMLA) is linker. The segment at 248 to 454 (GANLRDPARI…GWQRPVKKPK (207 aa)) is N-acetyltransferase. Residues Arg330 and Lys348 each contribute to the UDP-N-acetyl-alpha-D-glucosamine site. His360 (proton acceptor) is an active-site residue. UDP-N-acetyl-alpha-D-glucosamine is bound by residues Tyr363 and Asn374. Acetyl-CoA is bound by residues Ala377, 383 to 384 (NY), Ser402, Ala420, and Arg437.

The protein in the N-terminal section; belongs to the N-acetylglucosamine-1-phosphate uridyltransferase family. In the C-terminal section; belongs to the transferase hexapeptide repeat family. Homotrimer. Requires Mg(2+) as cofactor.

It localises to the cytoplasm. The enzyme catalyses alpha-D-glucosamine 1-phosphate + acetyl-CoA = N-acetyl-alpha-D-glucosamine 1-phosphate + CoA + H(+). It carries out the reaction N-acetyl-alpha-D-glucosamine 1-phosphate + UTP + H(+) = UDP-N-acetyl-alpha-D-glucosamine + diphosphate. The protein operates within nucleotide-sugar biosynthesis; UDP-N-acetyl-alpha-D-glucosamine biosynthesis; N-acetyl-alpha-D-glucosamine 1-phosphate from alpha-D-glucosamine 6-phosphate (route II): step 2/2. It participates in nucleotide-sugar biosynthesis; UDP-N-acetyl-alpha-D-glucosamine biosynthesis; UDP-N-acetyl-alpha-D-glucosamine from N-acetyl-alpha-D-glucosamine 1-phosphate: step 1/1. It functions in the pathway bacterial outer membrane biogenesis; LPS lipid A biosynthesis. In terms of biological role, catalyzes the last two sequential reactions in the de novo biosynthetic pathway for UDP-N-acetylglucosamine (UDP-GlcNAc). The C-terminal domain catalyzes the transfer of acetyl group from acetyl coenzyme A to glucosamine-1-phosphate (GlcN-1-P) to produce N-acetylglucosamine-1-phosphate (GlcNAc-1-P), which is converted into UDP-GlcNAc by the transfer of uridine 5-monophosphate (from uridine 5-triphosphate), a reaction catalyzed by the N-terminal domain. The chain is Bifunctional protein GlmU from Shewanella amazonensis (strain ATCC BAA-1098 / SB2B).